Reading from the N-terminus, the 832-residue chain is Subtilisin-like protease SBT2.4 (832 aa).

Residues 1-27 form the signal peptide; sequence METNPRKLRSYSYICLIVCIFVLVVCA. The 65-residue stretch at 74–138 folds into the Inhibitor I9 domain; the sequence is EAKKIEEIHD…VEEDKGVKLM (65 aa). Residues 150 to 690 form the Peptidase S8 domain; it reads QQVWQKISNE…AGHVNPARAL (541 aa). D174 functions as the Charge relay system in the catalytic mechanism. 2 N-linked (GlcNAc...) asparagine glycosylation sites follow: N196 and N238. The active-site Charge relay system is H252. In terms of domain architecture, PA spans 425 to 524; sequence TNGSVLQPLT…SAAQIILRYY (100 aa). N426 is a glycosylation site (N-linked (GlcNAc...) asparagine). The Charge relay system role is filled by S618. N-linked (GlcNAc...) asparagine glycans are attached at residues N761, N774, and N800.

The protein belongs to the peptidase S8 family.

The protein localises to the secreted. Its function is as follows. Serine protease required for epidermal surface formation in embryos and juvenile plants. Involved in embryonic cuticle formation downstream of BHLH95/ZOU. The polypeptide is Subtilisin-like protease SBT2.4 (Arabidopsis thaliana (Mouse-ear cress)).